We begin with the raw amino-acid sequence, 290 residues long: Ribosomal RNA small subunit methyltransferase A (290 aa).

S-adenosyl-L-methionine contacts are provided by asparagine 27, leucine 29, glycine 54, glutamate 75, aspartate 100, and asparagine 125.

It belongs to the class I-like SAM-binding methyltransferase superfamily. rRNA adenine N(6)-methyltransferase family. RsmA subfamily.

It localises to the cytoplasm. The catalysed reaction is adenosine(1518)/adenosine(1519) in 16S rRNA + 4 S-adenosyl-L-methionine = N(6)-dimethyladenosine(1518)/N(6)-dimethyladenosine(1519) in 16S rRNA + 4 S-adenosyl-L-homocysteine + 4 H(+). In terms of biological role, specifically dimethylates two adjacent adenosines (A1518 and A1519) in the loop of a conserved hairpin near the 3'-end of 16S rRNA in the 30S particle. May play a critical role in biogenesis of 30S subunits. The chain is Ribosomal RNA small subunit methyltransferase A from Streptococcus pneumoniae (strain CGSP14).